The sequence spans 223 residues: Mating-type protein ALPHA2 (223 aa).

A DNA-binding region (homeobox; TALE-type) is located at residues 151–213 (EFKKGKRFLK…NRRRKDKITE (63 aa)).

Belongs to the TALE/M-ATYP homeobox family. In terms of assembly, forms a heterodimer with A1.

Its subcellular location is the nucleus. Mating type proteins are sequence specific DNA-binding proteins that act as master switches in yeast differentiation by controlling gene expression in a cell type-specific fashion. Transcriptional corepressor that acts in conjunction with A1 to repress transcription of haploid-specific genes. This is Mating-type protein ALPHA2 (HMLALPHA2) from Kluyveromyces lactis (strain ATCC 8585 / CBS 2359 / DSM 70799 / NBRC 1267 / NRRL Y-1140 / WM37) (Yeast).